A 489-amino-acid chain; its full sequence is ATP synthase subunit beta 1 (489 aa).

159-166 (GGAGVGKT) provides a ligand contact to ATP. The span at 465-477 (EKSKKAAEDKPKA) shows a compositional bias: basic and acidic residues. Residues 465–489 (EKSKKAAEDKPKAEEDEDATSLHDA) are disordered.

The protein belongs to the ATPase alpha/beta chains family. F-type ATPases have 2 components, CF(1) - the catalytic core - and CF(0) - the membrane proton channel. CF(1) has five subunits: alpha(3), beta(3), gamma(1), delta(1), epsilon(1). CF(0) has three main subunits: a(1), b(2) and c(9-12). The alpha and beta chains form an alternating ring which encloses part of the gamma chain. CF(1) is attached to CF(0) by a central stalk formed by the gamma and epsilon chains, while a peripheral stalk is formed by the delta and b chains.

The protein localises to the cell inner membrane. The enzyme catalyses ATP + H2O + 4 H(+)(in) = ADP + phosphate + 5 H(+)(out). Functionally, produces ATP from ADP in the presence of a proton gradient across the membrane. The catalytic sites are hosted primarily by the beta subunits. This Marinomonas sp. (strain MWYL1) protein is ATP synthase subunit beta 1.